The sequence spans 359 residues: Phospho-N-acetylmuramoyl-pentapeptide-transferase (359 aa).

Transmembrane regions (helical) follow at residues 3 to 23, 55 to 75, 84 to 104, 117 to 137, 156 to 176, 190 to 210, 231 to 251, 255 to 275, 283 to 303, and 330 to 350; these read QILIAVAIALAVAILLTPVLI, VAIIAGIWVSYFGTHLVGVLM, GLLVLGLATSLGVVGFLDDLI, TAKTVGILVAAVLFGVLALQF, IATVTLAPAVFVLFCVVVVSA, LAAGAMAMVCAAYVLITFWQF, LAIIAAATAGACIGFLWWNAA, IFMGDTGSLALGGIIAGLSVT, VVLGALFVAEVTSVVVQILAF, and VIIRFWLLTAIACGLGVALFY.

The protein belongs to the glycosyltransferase 4 family. MraY subfamily. The cofactor is Mg(2+).

It localises to the cell membrane. It catalyses the reaction UDP-N-acetyl-alpha-D-muramoyl-L-alanyl-gamma-D-glutamyl-meso-2,6-diaminopimeloyl-D-alanyl-D-alanine + di-trans,octa-cis-undecaprenyl phosphate = di-trans,octa-cis-undecaprenyl diphospho-N-acetyl-alpha-D-muramoyl-L-alanyl-D-glutamyl-meso-2,6-diaminopimeloyl-D-alanyl-D-alanine + UMP. The protein operates within cell wall biogenesis; peptidoglycan biosynthesis. In terms of biological role, catalyzes the initial step of the lipid cycle reactions in the biosynthesis of the cell wall peptidoglycan: transfers peptidoglycan precursor phospho-MurNAc-pentapeptide from UDP-MurNAc-pentapeptide onto the lipid carrier undecaprenyl phosphate, yielding undecaprenyl-pyrophosphoryl-MurNAc-pentapeptide, known as lipid I. In Mycolicibacterium gilvum (strain PYR-GCK) (Mycobacterium gilvum (strain PYR-GCK)), this protein is Phospho-N-acetylmuramoyl-pentapeptide-transferase.